The primary structure comprises 577 residues: Aspartate--tRNA(Asp/Asn) ligase (577 aa).

Residue Glu171 participates in L-aspartate binding. The tract at residues 195–198 is aspartate; it reads QLFK. L-aspartate is bound at residue Arg217. Residues 217–219 and Gln226 each bind ATP; that span reads RDE. L-aspartate is bound at residue His444. An ATP-binding site is contributed by Glu474. Residue Arg481 participates in L-aspartate binding. Residue 526–529 coordinates ATP; it reads GFDR.

It belongs to the class-II aminoacyl-tRNA synthetase family. Type 1 subfamily. As to quaternary structure, homodimer.

It localises to the cytoplasm. It catalyses the reaction tRNA(Asx) + L-aspartate + ATP = L-aspartyl-tRNA(Asx) + AMP + diphosphate. Functionally, aspartyl-tRNA synthetase with relaxed tRNA specificity since it is able to aspartylate not only its cognate tRNA(Asp) but also tRNA(Asn). Reaction proceeds in two steps: L-aspartate is first activated by ATP to form Asp-AMP and then transferred to the acceptor end of tRNA(Asp/Asn). This Helicobacter pylori (strain P12) protein is Aspartate--tRNA(Asp/Asn) ligase.